A 580-amino-acid polypeptide reads, in one-letter code: TRAF-type zinc finger domain-containing protein 1 (580 aa).

Alanine 2 is modified (N-acetylalanine). The TRAF-type zinc finger occupies 27-103 (IHEIHCQRNI…DLELSVLKLK (77 aa)). The residue at position 190 (serine 190) is a Phosphoserine. Residues 197 to 209 (TTNQRSMTAQFPI) are compositionally biased toward polar residues. Residues 197–236 (TTNQRSMTAQFPIQNNLLEEQERQERNRSRQTPKERGEDS) are disordered. Residues 216-235 (EQERQERNRSRQTPKERGED) are compositionally biased toward basic and acidic residues. Serine 326, serine 414, and serine 429 each carry phosphoserine. Positions 392 to 580 (PATANNHVSE…GAGDAEEEEE (189 aa)) are disordered. Residues 409-419 (QPRETSPELPK) are compositionally biased toward basic and acidic residues. Over residues 453–463 (PPNNTTAPPNR) the composition is skewed to low complexity. Serine 469 bears the Phosphoserine mark.

Interacts with MAVS, TICAM1, TRAF1, TRAF2, TRAF3 and TRAF6.

Negative feedback regulator that controls excessive innate immune responses. Regulates both Toll-like receptor 4 (TLR4) and DDX58/RIG1-like helicases (RLH) pathways. May inhibit the LTR pathway by direct interaction with TRAF6 and attenuation of NF-kappa-B activation. May negatively regulate the RLH pathway downstream from MAVS and upstream of NF-kappa-B and IRF3. This chain is TRAF-type zinc finger domain-containing protein 1 (TRAFD1), found in Bos taurus (Bovine).